The following is a 360-amino-acid chain: UPF0284 protein APE_2029.1 (360 aa).

This sequence belongs to the UPF0284 family.

This Aeropyrum pernix (strain ATCC 700893 / DSM 11879 / JCM 9820 / NBRC 100138 / K1) protein is UPF0284 protein APE_2029.1.